The primary structure comprises 174 residues: ATP-dependent protease subunit HslV (174 aa).

The active site involves Thr-2. Na(+) is bound by residues Gly-157, Cys-160, and Thr-163.

It belongs to the peptidase T1B family. HslV subfamily. In terms of assembly, a double ring-shaped homohexamer of HslV is capped on each side by a ring-shaped HslU homohexamer. The assembly of the HslU/HslV complex is dependent on binding of ATP.

It localises to the cytoplasm. It catalyses the reaction ATP-dependent cleavage of peptide bonds with broad specificity.. Its activity is regulated as follows. Allosterically activated by HslU binding. Its function is as follows. Protease subunit of a proteasome-like degradation complex believed to be a general protein degrading machinery. In Shewanella putrefaciens (strain CN-32 / ATCC BAA-453), this protein is ATP-dependent protease subunit HslV.